The chain runs to 96 residues: Co-chaperonin GroES (96 aa).

It belongs to the GroES chaperonin family. Heptamer of 7 subunits arranged in a ring. Interacts with the chaperonin GroEL.

The protein localises to the cytoplasm. Together with the chaperonin GroEL, plays an essential role in assisting protein folding. The GroEL-GroES system forms a nano-cage that allows encapsulation of the non-native substrate proteins and provides a physical environment optimized to promote and accelerate protein folding. GroES binds to the apical surface of the GroEL ring, thereby capping the opening of the GroEL channel. The polypeptide is Co-chaperonin GroES (Neisseria meningitidis serogroup A / serotype 4A (strain DSM 15465 / Z2491)).